The chain runs to 296 residues: MRKFIFVLLTLLLVSPFSFAMKGIIWQPQNRDSQVTDTQWQGLMSQLRLQGFDTLVLQWTRYGDAFTQPEQRTLLFKRAAAAQQAGLKLIVGLNADPEFFMHQKQSSAALESYLNRLLAADLQQARLWSAAPGITPDGWYISAEIDDLNWRSEAARQPLLTWLNNAQRLISDVSAKPVYISSFFAGNMSPDGYRQLLEHVKATGVNVWVQDGSGVDKLTAEQRERYLQASADCQSPAPASGVVYELFVAGKGKTFTAKPKPDAEIASLLAKRSSCGKDTLYFSLRYLPVAHGILEY.

A signal peptide spans 1-20 (MRKFIFVLLTLLLVSPFSFA).

This is an uncharacterized protein from Escherichia coli (strain K12).